A 567-amino-acid chain; its full sequence is Probable diguanylate cyclase DgcQ (567 aa).

A run of 2 helical transmembrane segments spans residues 20-40 and 357-377; these read FGPG…STLL and IALT…WGVI. In terms of domain architecture, GGDEF spans 425–560; the sequence is QPFSVIQLDL…GRNRICASDA (136 aa). Mg(2+) is bound at residue D433. Substrate contacts are provided by N441, H446, and D450. Residue E476 participates in Mg(2+) binding. Catalysis depends on E476, which acts as the Proton acceptor.

Homodimer. It depends on Mg(2+) as a cofactor.

The protein resides in the cell inner membrane. The enzyme catalyses 2 GTP = 3',3'-c-di-GMP + 2 diphosphate. It participates in glycan metabolism; bacterial cellulose biosynthesis. It functions in the pathway purine metabolism; 3',5'-cyclic di-GMP biosynthesis. Functionally, catalyzes the synthesis of cyclic-di-GMP (c-di-GMP) via the condensation of 2 GTP molecules. Cyclic-di-GMP is a second messenger which controls cell surface-associated traits in bacteria. Involved in the regulation of cellulose production. In Salmonella typhi, this protein is Probable diguanylate cyclase DgcQ.